Consider the following 398-residue polypeptide: Serpin-Z2B (398 aa).

An RCL region spans residues 343-367; it reads GTEAAATTIAKVVLRQAPPPSVLDF.

This sequence belongs to the serpin family.

Functionally, inhibits chymotrypsin, cathepsin G and trypsin in vitro. In Triticum aestivum (Wheat), this protein is Serpin-Z2B.